A 465-amino-acid chain; its full sequence is Macrophage metalloelastase (465 aa).

A signal peptide spans 1–21 (MKFLLVLVLLVSLQVSACGAA). Positions 22-101 (PMNESEFAEW…DVQHLRAVPQ (80 aa)) are cleaved as a propeptide — activation peptide. The short motif at 86–93 (SRCGVPDV) is the Cysteine switch element. Residue cysteine 88 coordinates Zn(2+). 2 residues coordinate Ca(2+): aspartate 120 and aspartate 154. The Zn(2+) site is built by histidine 164 and aspartate 166. Residues aspartate 171, glycine 172, glycine 174, and threonine 176 each coordinate Ca(2+). A Zn(2+)-binding site is contributed by histidine 179. The Ca(2+) site is built by glycine 186 and aspartate 190. Zn(2+) is bound at residue histidine 192. 3 residues coordinate Ca(2+): aspartate 194, glutamate 195, and glutamate 197. Histidine 214 is a Zn(2+) binding site. Residue glutamate 215 is part of the active site. Residues histidine 218 and histidine 224 each coordinate Zn(2+). The cysteines at positions 278 and 465 are disulfide-linked. Hemopexin repeat units follow at residues 281–324 (SLSF…WPTI), 325–371 (PSGI…GFPA), 373–421 (VKKI…FPGI), and 422–465 (RPKI…WFGC). Aspartate 285 serves as a coordination point for Ca(2+). A glycan (N-linked (GlcNAc...) asparagine) is linked at asparagine 313. Positions 377 and 426 each coordinate Ca(2+).

The protein belongs to the peptidase M10A family. Ca(2+) is required as a cofactor. Zn(2+) serves as cofactor.

The protein resides in the secreted. The protein localises to the extracellular space. It is found in the extracellular matrix. It carries out the reaction Hydrolysis of soluble and insoluble elastin. Specific cleavages are also produced at 14-Ala-|-Leu-15 and 16-Tyr-|-Leu-17 in the B chain of insulin.. Functionally, may be involved in tissue injury and remodeling. Has significant elastolytic activity. Can accept large and small amino acids at the P1' site, but has a preference for leucine. Aromatic or hydrophobic residues are preferred at the P1 site, with small hydrophobic residues (preferably alanine) occupying P3. This chain is Macrophage metalloelastase (Mmp12), found in Rattus norvegicus (Rat).